Reading from the N-terminus, the 450-residue chain is Chromosomal replication initiator protein DnaA (450 aa).

Residues 1 to 84 (MENIHDLWDR…AVKFIIPPNQ (84 aa)) form a domain I, interacts with DnaA modulators region. The segment at 84 to 111 (QDDEELEFQSSKKKQRKPYEETNDFPQS) is domain II. The tract at residues 89-108 (LEFQSSKKKQRKPYEETNDF) is disordered. A domain III, AAA+ region region spans residues 112 to 328 (MLNPKYTFDT…GALIRVVAYS (217 aa)). Residues glycine 156, glycine 158, lysine 159, and threonine 160 each contribute to the ATP site. A domain IV, binds dsDNA region spans residues 329-450 (SLINKEITAD…QEIQEKLKQL (122 aa)).

Belongs to the DnaA family. As to quaternary structure, oligomerizes as a right-handed, spiral filament on DNA at oriC.

Its subcellular location is the cytoplasm. Plays an essential role in the initiation and regulation of chromosomal replication. ATP-DnaA binds to the origin of replication (oriC) to initiate formation of the DNA replication initiation complex once per cell cycle. Binds the DnaA box (a 9 base pair repeat at the origin) and separates the double-stranded (ds)DNA. Forms a right-handed helical filament on oriC DNA; dsDNA binds to the exterior of the filament while single-stranded (ss)DNA is stabiized in the filament's interior. The ATP-DnaA-oriC complex binds and stabilizes one strand of the AT-rich DNA unwinding element (DUE), permitting loading of DNA polymerase. After initiation quickly degrades to an ADP-DnaA complex that is not apt for DNA replication. Binds acidic phospholipids. The polypeptide is Chromosomal replication initiator protein DnaA (Geobacillus kaustophilus (strain HTA426)).